The chain runs to 313 residues: PDZ domain-containing protein GIPC2 (313 aa).

Residues 14–27 (KETSRLVEGEHTDA) are compositionally biased toward basic and acidic residues. The interval 14 to 34 (KETSRLVEGEHTDAAVRSLPS) is disordered. A PDZ domain is found at 117 to 197 (EVNVYKSEDS…EELFTLTLIE (81 aa)).

Belongs to the GIPC family. Probably interacts with SEMA5A.

It localises to the cytoplasm. The polypeptide is PDZ domain-containing protein GIPC2 (GIPC2) (Bos taurus (Bovine)).